Here is an 880-residue protein sequence, read N- to C-terminus: MRKLTPMMQQYMEIKNQYKDALMFFRLGDFYELFFDDAETASRELEITLTARDCGLESKAPMCGVPYHAANGYIDKLVSKGYKVAICEQVEDPSVAKGIVKRDVVRVITPGTLIDTNLLEDKKNNYLVSLYMSSLGCGFSYVDISTGELLSTEIVGTSIEQNLIDEISKIEPNELIYFVEEEDKIGTNFIEGIRKKLNIHISKYDPWTFEESYAMNQIKNQFNILTVESLGFSLNHLGINATGALIHYLKSTQKRTLSHINKINIYTFTEKMVLDISTRRNLELTETIRGKNKKGSLLWILDKTQTAMGGRMIRKWIEEPLLNIQNINRRLEAVATLKNDILLRCELKESLKQIYDLERLSGKIAFGSATPRDLVALKKSVAFLPDIKKLFENENSGLLKELLNNIDTLEDIQALIESSILDEPSISLKDGGIIKEGYNDELDELYVAAREGKHWIAKLEQAEKDRTGIKSLKVGYNKIFGYYIEITKSNLHLAPENYIRKQTLANCERYITPELKELEDKILGAEEKSIAIEYEQFIEIRNMLLHEIERIQRTARAVAELDVLYSFAEAASENNYVKPTVNSSETIDIKEGRHPVVEKVLENNMFISNDTYINTEDEQLLMITGPNMAGKSTYMRQVALIILMAQIGSFVPATSATIGITDRIFTRVGANDDLSQGQSTFMVEMSEMATIVNLATKKSLLIVDEIGRGTSTFDGLSIAWSTAEYICQSLGSRTLFSTHYHELTKLSETYRGIKNYKVLVKEDKEDVIFLHKVVKGNADRSYGIQVAKLAGLPAAIITRASHILSDLERESIQKEQYIIESTAENTLTASTDVANEKQLKLDDFIESEIVKDLKKINLLETTPMDALNILYQLQKKVAEI.

625–632 (GPNMAGKS) lines the ATP pocket.

The protein belongs to the DNA mismatch repair MutS family.

In terms of biological role, this protein is involved in the repair of mismatches in DNA. It is possible that it carries out the mismatch recognition step. This protein has a weak ATPase activity. The protein is DNA mismatch repair protein MutS of Alkaliphilus oremlandii (strain OhILAs) (Clostridium oremlandii (strain OhILAs)).